Reading from the N-terminus, the 332-residue chain is DNA-directed RNA polymerase subunit alpha (332 aa).

Residues 1-244 are alpha N-terminal domain (alpha-NTD); the sequence is MKKHAKVYYS…AHLNLLADVE (244 aa). The segment at 259-332 is alpha C-terminal domain (alpha-CTD); that stretch reads IKEEPIRRFS…NYKNENKGEN (74 aa).

It belongs to the RNA polymerase alpha chain family. In terms of assembly, homodimer. The RNAP catalytic core consists of 2 alpha, 1 beta, 1 beta' and 1 omega subunit. When a sigma factor is associated with the core the holoenzyme is formed, which can initiate transcription.

It catalyses the reaction RNA(n) + a ribonucleoside 5'-triphosphate = RNA(n+1) + diphosphate. DNA-dependent RNA polymerase catalyzes the transcription of DNA into RNA using the four ribonucleoside triphosphates as substrates. In Mesomycoplasma hyopneumoniae (strain 7448) (Mycoplasma hyopneumoniae), this protein is DNA-directed RNA polymerase subunit alpha.